Reading from the N-terminus, the 247-residue chain is Ras-like protein family member 11B (247 aa).

Residues 29–247 (ASSRVIKIAV…SAKVRTATSV (219 aa)) are small GTPase-like. GTP contacts are provided by residues 40–47 (GGSGVGKT), 87–91 (DTPGV), and 152–155 (NKAD). The interval 205 to 228 (QNTGTPERRKNSLIPRPKSPNMQD) is disordered.

It belongs to the small GTPase superfamily. Ras family.

It carries out the reaction GTP + H2O = GDP + phosphate + H(+). In Xenopus tropicalis (Western clawed frog), this protein is Ras-like protein family member 11B.